Reading from the N-terminus, the 707-residue chain is Ribosomal RNA large subunit methyltransferase K/L (707 aa).

One can recognise a THUMP domain in the interval 43–154; sequence QIYRCCLWSR…KDKAILGVDM (112 aa).

It belongs to the methyltransferase superfamily. RlmKL family.

The protein resides in the cytoplasm. The enzyme catalyses guanosine(2445) in 23S rRNA + S-adenosyl-L-methionine = N(2)-methylguanosine(2445) in 23S rRNA + S-adenosyl-L-homocysteine + H(+). The catalysed reaction is guanosine(2069) in 23S rRNA + S-adenosyl-L-methionine = N(2)-methylguanosine(2069) in 23S rRNA + S-adenosyl-L-homocysteine + H(+). Functionally, specifically methylates the guanine in position 2445 (m2G2445) and the guanine in position 2069 (m7G2069) of 23S rRNA. The chain is Ribosomal RNA large subunit methyltransferase K/L from Vibrio campbellii (strain ATCC BAA-1116).